A 208-amino-acid chain; its full sequence is FMN-dependent NADH:quinone oxidoreductase (208 aa).

FMN is bound by residues Ser10, 16 to 18 (SRS), and 96 to 99 (MYNF).

Belongs to the azoreductase type 1 family. Homodimer. FMN serves as cofactor.

The catalysed reaction is 2 a quinone + NADH + H(+) = 2 a 1,4-benzosemiquinone + NAD(+). It carries out the reaction N,N-dimethyl-1,4-phenylenediamine + anthranilate + 2 NAD(+) = 2-(4-dimethylaminophenyl)diazenylbenzoate + 2 NADH + 2 H(+). Functionally, quinone reductase that provides resistance to thiol-specific stress caused by electrophilic quinones. Its function is as follows. Also exhibits azoreductase activity. Catalyzes the reductive cleavage of the azo bond in aromatic azo compounds to the corresponding amines. The protein is FMN-dependent NADH:quinone oxidoreductase of Xanthobacter autotrophicus (strain ATCC BAA-1158 / Py2).